Consider the following 274-residue polypeptide: Carboxy-S-adenosyl-L-methionine synthase (274 aa).

S-adenosyl-L-methionine contacts are provided by residues tyrosine 59, 93 to 95 (GCS), 149 to 150 (DI), asparagine 164, and arginine 231.

It belongs to the class I-like SAM-binding methyltransferase superfamily. Cx-SAM synthase family. Homodimer.

The catalysed reaction is prephenate + S-adenosyl-L-methionine = carboxy-S-adenosyl-L-methionine + 3-phenylpyruvate + H2O. Its function is as follows. Catalyzes the conversion of S-adenosyl-L-methionine (SAM) to carboxy-S-adenosyl-L-methionine (Cx-SAM). This Psychrobacter sp. (strain PRwf-1) protein is Carboxy-S-adenosyl-L-methionine synthase.